The sequence spans 503 residues: Aspartyl/glutamyl-tRNA(Asn/Gln) amidotransferase subunit B (503 aa).

The protein belongs to the GatB/GatE family. GatB subfamily. As to quaternary structure, heterotrimer of A, B and C subunits.

The enzyme catalyses L-glutamyl-tRNA(Gln) + L-glutamine + ATP + H2O = L-glutaminyl-tRNA(Gln) + L-glutamate + ADP + phosphate + H(+). It carries out the reaction L-aspartyl-tRNA(Asn) + L-glutamine + ATP + H2O = L-asparaginyl-tRNA(Asn) + L-glutamate + ADP + phosphate + 2 H(+). Allows the formation of correctly charged Asn-tRNA(Asn) or Gln-tRNA(Gln) through the transamidation of misacylated Asp-tRNA(Asn) or Glu-tRNA(Gln) in organisms which lack either or both of asparaginyl-tRNA or glutaminyl-tRNA synthetases. The reaction takes place in the presence of glutamine and ATP through an activated phospho-Asp-tRNA(Asn) or phospho-Glu-tRNA(Gln). The sequence is that of Aspartyl/glutamyl-tRNA(Asn/Gln) amidotransferase subunit B from Cereibacter sphaeroides (strain ATCC 17023 / DSM 158 / JCM 6121 / CCUG 31486 / LMG 2827 / NBRC 12203 / NCIMB 8253 / ATH 2.4.1.) (Rhodobacter sphaeroides).